The sequence spans 457 residues: Dynein regulatory complex protein 10 (457 aa).

3 coiled-coil regions span residues 101-127, 209-258, and 292-381; these read EKAS…DQER, IQDI…LHQV, and QQDI…AESE. The IQ domain occupies 397 to 426; it reads MVRAATLIQAMWKGYLVRSMLRSRKKKRVK. Residues 419–457 are disordered; that stretch reads SRKKKRVKSKGKDKGKGKEKPKEEKGKEKKAKGKGKGKK. Residues 428-445 are compositionally biased toward basic and acidic residues; the sequence is KGKDKGKGKEKPKEEKGK. Basic residues predominate over residues 446 to 457; the sequence is EKKAKGKGKGKK.

The protein belongs to the DRC10 family. In terms of assembly, component of the nexin-dynein regulatory complex (N-DRC). Interacts with CFAP52.

It is found in the cytoplasm. The protein resides in the cytoskeleton. The protein localises to the flagellum axoneme. Functionally, component of the nexin-dynein regulatory complex (N-DRC), a key regulator of ciliary/flagellar motility which maintains the alignment and integrity of the distal axoneme and regulates microtubule sliding in motile axonemes. This is Dynein regulatory complex protein 10 (Iqcd) from Rattus norvegicus (Rat).